A 681-amino-acid polypeptide reads, in one-letter code: Angiomotin-like 2b (681 aa).

Over residues 68 to 84 (GGGAASSSQSSSESLSQ) the composition is skewed to low complexity. A disordered region spans residues 68 to 106 (GGGAASSSQSSSESLSQDEPHSPQLSTRQEPQGQEHQVD). The span at 90-102 (PQLSTRQEPQGQE) shows a compositional bias: polar residues. Position 126 is a phosphotyrosine; by FGFR1 (Tyr126). Coiled-coil stretches lie at residues 268-319 (NACS…LMKG), 362-441 (IEKL…LQAT), and 481-508 (VYTL…WEQK). Positions 589–618 (QLGALQPATADSSIISSHSTPAHTAQGKER) are disordered. Polar residues predominate over residues 597-611 (TADSSIISSHSTPAH). A PDZ-binding motif is present at residues 678–681 (EIFI).

Belongs to the angiomotin family. Interacts with SRC. Phosphorylation at Tyr-126 is necessary for efficient binding to SRC and synergistically functioning with SRC to activate the downstream MAPK pathway. As to expression, expressed in endothelial cells.

The protein resides in the recycling endosome. It localises to the cytoplasm. The protein localises to the cell projection. Its subcellular location is the podosome. It is found in the cell junction. Its function is as follows. Required for proper architecture of actin filaments and for cell movements during embryogenesis. Plays a role in the radial actin fiber architecture in skin epithelial cells, thereby maintains cell geometry, size and cell interconnectivity within the skin. Plays an important role in coupling actin fibers to cell junctions in endothelial cells and is therefore required for correct endothelial cell morphology and maintenance of dorsal aorta lumen expansion during embryogenesis. May further play a role in the polarity, proliferation and migration of endothelial cells, and therefore participates in angiogenesis. May regulate the translocation of phosphorylated SRC to peripheral cell-matrix adhesion sites. This Danio rerio (Zebrafish) protein is Angiomotin-like 2b.